The primary structure comprises 258 residues: Imidazole glycerol phosphate synthase subunit HisF (258 aa).

Residues D11 and D130 contribute to the active site.

This sequence belongs to the HisA/HisF family. As to quaternary structure, heterodimer of HisH and HisF.

Its subcellular location is the cytoplasm. It catalyses the reaction 5-[(5-phospho-1-deoxy-D-ribulos-1-ylimino)methylamino]-1-(5-phospho-beta-D-ribosyl)imidazole-4-carboxamide + L-glutamine = D-erythro-1-(imidazol-4-yl)glycerol 3-phosphate + 5-amino-1-(5-phospho-beta-D-ribosyl)imidazole-4-carboxamide + L-glutamate + H(+). It participates in amino-acid biosynthesis; L-histidine biosynthesis; L-histidine from 5-phospho-alpha-D-ribose 1-diphosphate: step 5/9. IGPS catalyzes the conversion of PRFAR and glutamine to IGP, AICAR and glutamate. The HisF subunit catalyzes the cyclization activity that produces IGP and AICAR from PRFAR using the ammonia provided by the HisH subunit. The sequence is that of Imidazole glycerol phosphate synthase subunit HisF from Edwardsiella ictaluri (strain 93-146).